Here is a 444-residue protein sequence, read N- to C-terminus: tRNA modification GTPase MnmE (444 aa).

Positions 24, 81, and 121 each coordinate (6S)-5-formyl-5,6,7,8-tetrahydrofolate. Residues 218 to 368 (GLTVVIAGPP…LLDALVGFAR (151 aa)) enclose the TrmE-type G domain. Residues 228 to 233 (NAGKST), 247 to 253 (SPQAGTT), 272 to 275 (DTAG), and 349 to 351 (SAR) each bind GTP. Positions 232 and 253 each coordinate Mg(2+). Lys-444 serves as a coordination point for (6S)-5-formyl-5,6,7,8-tetrahydrofolate.

This sequence belongs to the TRAFAC class TrmE-Era-EngA-EngB-Septin-like GTPase superfamily. TrmE GTPase family. In terms of assembly, homodimer. Heterotetramer of two MnmE and two MnmG subunits. It depends on K(+) as a cofactor.

Its subcellular location is the cytoplasm. Exhibits a very high intrinsic GTPase hydrolysis rate. Involved in the addition of a carboxymethylaminomethyl (cmnm) group at the wobble position (U34) of certain tRNAs, forming tRNA-cmnm(5)s(2)U34. This is tRNA modification GTPase MnmE from Bradyrhizobium sp. (strain ORS 278).